The following is a 209-amino-acid chain: Uracil phosphoribosyltransferase (209 aa).

5-phospho-alpha-D-ribose 1-diphosphate-binding positions include Arg79, Arg104, and 131–139 (DPMLATGGS). Uracil contacts are provided by residues Ile194 and 199–201 (GDA). Asp200 is a binding site for 5-phospho-alpha-D-ribose 1-diphosphate.

This sequence belongs to the UPRTase family. The cofactor is Mg(2+).

It catalyses the reaction UMP + diphosphate = 5-phospho-alpha-D-ribose 1-diphosphate + uracil. It participates in pyrimidine metabolism; UMP biosynthesis via salvage pathway; UMP from uracil: step 1/1. Allosterically activated by GTP. Functionally, catalyzes the conversion of uracil and 5-phospho-alpha-D-ribose 1-diphosphate (PRPP) to UMP and diphosphate. The protein is Uracil phosphoribosyltransferase of Streptococcus sanguinis (strain SK36).